We begin with the raw amino-acid sequence, 195 residues long: MPTLEPSVLDQLFHEARTHNVWLDNPVDDELLHTLYDTVKYGPTAANSTPARFVFVKSAAAKEQLVPCMSAGNQEKTRQAPVTVIVAYDTQFHEQLPKLFPHVDARSWYAGDQARINAAALMNSSLQGGYLVIAARALGLDCGPMGGFDADKVNATFFPDGQWKVNFICNLGYGDTSKVHPRNPRLTFEEACRVL.

It belongs to the nitroreductase family. HadB/RutE subfamily. Requires FMN as cofactor.

The protein is Putative NADH dehydrogenase/NAD(P)H nitroreductase RSc1004 of Ralstonia nicotianae (strain ATCC BAA-1114 / GMI1000) (Ralstonia solanacearum).